Reading from the N-terminus, the 215-residue chain is Methylthioribulose-1-phosphate dehydratase (215 aa).

H103 and H105 together coordinate Zn(2+).

This sequence belongs to the aldolase class II family. MtnB subfamily. The cofactor is Zn(2+).

The enzyme catalyses 5-(methylsulfanyl)-D-ribulose 1-phosphate = 5-methylsulfanyl-2,3-dioxopentyl phosphate + H2O. It participates in amino-acid biosynthesis; L-methionine biosynthesis via salvage pathway; L-methionine from S-methyl-5-thio-alpha-D-ribose 1-phosphate: step 2/6. In terms of biological role, catalyzes the dehydration of methylthioribulose-1-phosphate (MTRu-1-P) into 2,3-diketo-5-methylthiopentyl-1-phosphate (DK-MTP-1-P). This chain is Methylthioribulose-1-phosphate dehydratase, found in Sulfurihydrogenibium sp. (strain YO3AOP1).